The chain runs to 499 residues: Cysteine--tRNA ligase (499 aa).

A Zn(2+)-binding site is contributed by Cys-29. The short motif at 31-41 (VTVYDLCHLGH) is the 'HIGH' region element. Zn(2+)-binding residues include Cys-213, His-238, and Glu-242. Residues 270 to 274 (KMSKS) carry the 'KMSKS' region motif. Lys-273 lines the ATP pocket.

This sequence belongs to the class-I aminoacyl-tRNA synthetase family. As to quaternary structure, monomer. The cofactor is Zn(2+).

It localises to the cytoplasm. It carries out the reaction tRNA(Cys) + L-cysteine + ATP = L-cysteinyl-tRNA(Cys) + AMP + diphosphate. The protein is Cysteine--tRNA ligase of Prochlorococcus marinus (strain MIT 9303).